The sequence spans 455 residues: UDP-glycosyltransferase 79B2 (455 aa).

UDP-alpha-D-glucose contacts are provided by residues Ser266, 325 to 327, 342 to 350, and 364 to 367; these read VQQ, HCGFGSMWE, and LGDQ.

Belongs to the UDP-glycosyltransferase family.

This chain is UDP-glycosyltransferase 79B2 (UGT79B2), found in Arabidopsis thaliana (Mouse-ear cress).